A 347-amino-acid chain; its full sequence is tRNA N6-adenosine threonylcarbamoyltransferase (347 aa).

Fe cation contacts are provided by His-117 and His-121. Substrate contacts are provided by residues 140 to 144 (LVSGG), Asp-173, Gly-186, and Asn-280. Position 308 (Asp-308) interacts with Fe cation.

This sequence belongs to the KAE1 / TsaD family. It depends on Fe(2+) as a cofactor.

Its subcellular location is the cytoplasm. The enzyme catalyses L-threonylcarbamoyladenylate + adenosine(37) in tRNA = N(6)-L-threonylcarbamoyladenosine(37) in tRNA + AMP + H(+). Functionally, required for the formation of a threonylcarbamoyl group on adenosine at position 37 (t(6)A37) in tRNAs that read codons beginning with adenine. Is involved in the transfer of the threonylcarbamoyl moiety of threonylcarbamoyl-AMP (TC-AMP) to the N6 group of A37, together with TsaE and TsaB. TsaD likely plays a direct catalytic role in this reaction. The sequence is that of tRNA N6-adenosine threonylcarbamoyltransferase from Psychrobacter sp. (strain PRwf-1).